The following is a 177-amino-acid chain: Mitochondrial inner membrane protease subunit 2 (177 aa).

Residues serine 41 and lysine 91 contribute to the active site. Residues 134–152 (TFGPISSGLVIGKAITIVW) traverse the membrane as a helical segment.

This sequence belongs to the peptidase S26 family. IMP2 subfamily. In terms of assembly, component of the mitochondrial inner membrane peptidase (IMP) complex which at least consists of IMP1, IMP2 and SOM1. Post-translationally, the N-terminus is blocked.

It is found in the mitochondrion inner membrane. Functionally, catalytic component of the mitochondrial inner membrane peptidase (IMP) complex. IMP catalyzes the removal of signal peptides required for the targeting of proteins from the mitochondrial matrix, across the inner membrane, into the inter-membrane space. The two catalytic IMP subunits seem to have non-overlapping substrate specificities. IMP2 substrates include nuclear encoded CYB2, mitochondrially encoded COX2 and cytochrome c1. Required for the stability of IMP1. In Saccharomyces cerevisiae (strain ATCC 204508 / S288c) (Baker's yeast), this protein is Mitochondrial inner membrane protease subunit 2 (IMP2).